Consider the following 284-residue polypeptide: Tropomyosin alpha-1 chain (284 aa).

A disordered region spans residues 1–40 (MDAIKKKMQMLKLDKENALDRAEQAEADKKGAEDKSKQLE). A coiled-coil region spans residues 1 to 284 (MDAIKKKMQM…DHALNDMTSI (284 aa)). The span at 12 to 40 (KLDKENALDRAEQAEADKKGAEDKSKQLE) shows a compositional bias: basic and acidic residues.

This sequence belongs to the tropomyosin family. As to quaternary structure, homodimer. Heterodimer of an alpha (TPM1, TPM3 or TPM4) and a beta (TPM2) chain.

It is found in the cytoplasm. It localises to the cytoskeleton. In terms of biological role, binds to actin filaments in muscle and non-muscle cells. Plays a central role, in association with the troponin complex, in the calcium dependent regulation of vertebrate striated muscle contraction. Smooth muscle contraction is regulated by interaction with caldesmon. In non-muscle cells is implicated in stabilizing cytoskeleton actin filaments. The polypeptide is Tropomyosin alpha-1 chain (tpm1) (Rana temporaria (European common frog)).